The sequence spans 297 residues: tRNA dimethylallyltransferase (297 aa).

15-22 (GPTASGKS) is a binding site for ATP. 17 to 22 (TASGKS) is a binding site for substrate. Interaction with substrate tRNA stretches follow at residues 40–43 (DSMQ) and 164–168 (QRIVR).

This sequence belongs to the IPP transferase family. In terms of assembly, monomer. Mg(2+) is required as a cofactor.

The catalysed reaction is adenosine(37) in tRNA + dimethylallyl diphosphate = N(6)-dimethylallyladenosine(37) in tRNA + diphosphate. Its function is as follows. Catalyzes the transfer of a dimethylallyl group onto the adenine at position 37 in tRNAs that read codons beginning with uridine, leading to the formation of N6-(dimethylallyl)adenosine (i(6)A). The sequence is that of tRNA dimethylallyltransferase from Rhizobium leguminosarum bv. trifolii (strain WSM2304).